Consider the following 513-residue polypeptide: Ankyrin repeat-containing protein YIL001W (513 aa).

ANK repeat units follow at residues 8 to 37 and 41 to 70; these read KNFE…NVNS and FDNS…VCDR. BTB domains follow at residues 122–179 and 274–360; these read RDIT…KFLY and PDVQ…DIPW.

The chain is Ankyrin repeat-containing protein YIL001W from Saccharomyces cerevisiae (strain ATCC 204508 / S288c) (Baker's yeast).